Reading from the N-terminus, the 299-residue chain is ATP phosphoribosyltransferase (299 aa).

It belongs to the ATP phosphoribosyltransferase family. Long subfamily. Equilibrium between an active dimeric form, an inactive hexameric form and higher aggregates. Interconversion between the various forms is largely reversible and is influenced by the natural substrates and inhibitors of the enzyme. Mg(2+) is required as a cofactor.

It is found in the cytoplasm. The enzyme catalyses 1-(5-phospho-beta-D-ribosyl)-ATP + diphosphate = 5-phospho-alpha-D-ribose 1-diphosphate + ATP. The protein operates within amino-acid biosynthesis; L-histidine biosynthesis; L-histidine from 5-phospho-alpha-D-ribose 1-diphosphate: step 1/9. Its activity is regulated as follows. Feedback inhibited by histidine. Its function is as follows. Catalyzes the condensation of ATP and 5-phosphoribose 1-diphosphate to form N'-(5'-phosphoribosyl)-ATP (PR-ATP). Has a crucial role in the pathway because the rate of histidine biosynthesis seems to be controlled primarily by regulation of HisG enzymatic activity. The polypeptide is ATP phosphoribosyltransferase (Edwardsiella ictaluri (strain 93-146)).